The sequence spans 697 residues: Elongation factor G 2 (697 aa).

One can recognise a tr-type G domain in the interval 5 to 280 (SKYRNIGIFA…AVVDYLPDPV (276 aa)). GTP-binding positions include 14–21 (AHVDAGKT), 78–82 (DTPGH), and 132–135 (NKLD).

The protein belongs to the TRAFAC class translation factor GTPase superfamily. Classic translation factor GTPase family. EF-G/EF-2 subfamily.

Its subcellular location is the cytoplasm. In terms of biological role, catalyzes the GTP-dependent ribosomal translocation step during translation elongation. During this step, the ribosome changes from the pre-translocational (PRE) to the post-translocational (POST) state as the newly formed A-site-bound peptidyl-tRNA and P-site-bound deacylated tRNA move to the P and E sites, respectively. Catalyzes the coordinated movement of the two tRNA molecules, the mRNA and conformational changes in the ribosome. The polypeptide is Elongation factor G 2 (Shewanella frigidimarina (strain NCIMB 400)).